We begin with the raw amino-acid sequence, 225 residues long: Receptor-transporting protein 2 (225 aa).

The Cytoplasmic segment spans residues 1–196; it reads MCTSLTTCEW…RAQAGSGYNF (196 aa). Residues 52 to 161 form a 3CxxC-type zinc finger; sequence ASGRFHCSWC…AEFCEACQEG (110 aa). Residues 197 to 219 traverse the membrane as a helical segment; that stretch reads LSLRWCLFWASLCLLVVYLQFSF. Topologically, residues 220–225 are extracellular; it reads LSPAFF.

The protein belongs to the TMEM7 family. Interacts with olfactory receptors. Expressed in circumvallate papillae and testis.

Its subcellular location is the cell membrane. In terms of biological role, specifically promotes functional cell surface expression of olfactory receptors, but not of other GPCRs. This chain is Receptor-transporting protein 2 (RTP2), found in Homo sapiens (Human).